The following is a 331-amino-acid chain: Leucine-rich repeat-containing protein 26 (331 aa).

Positions 1–26 (MRGSFFSRLPPQLSLLLLLSLRRVWT) are cleaved as a signal peptide. The Extracellular segment spans residues 27–261 (QEDIGTAPSK…QCTQSLAARD (235 aa)). The 38-residue stretch at 34–71 (PSKSPVAPECPEACSCSLGGKANCSALALPAVPADLSW) folds into the LRRNT domain. 2 disulfide bridges follow: cysteine 43–cysteine 49 and cysteine 47–cysteine 57. 5 LRR repeats span residues 72 to 93 (QVRS…AFAN), 96 to 117 (ALLY…AFWG), 120 to 141 (VLQW…TFAP), 144 to 165 (ALSF…ILGP), and 168 to 191 (LLRV…NNLP). The region spanning 201-255 (NPWTCNCALRPLCTWLRKHPRPASETETLLCVSPRLQTLSLLTAFPDAAFKQCTQ) is the LRRCT domain. 2 disulfides stabilise this stretch: cysteine 205–cysteine 231 and cysteine 207–cysteine 253. A helical transmembrane segment spans residues 262-282 (LAVVYALGPVSFLASLAICLA). Over 283–331 (LGSVLTACGARRRRRRRTTVRHLLRRQLDPEGPPSLEDAGSPVTAAIQA) the chain is Cytoplasmic. The disordered stretch occupies residues 310-331 (LDPEGPPSLEDAGSPVTAAIQA).

As to quaternary structure, interacts with KCNMA1.

The protein localises to the cell membrane. It is found in the cytoplasm. The protein resides in the cytoskeleton. Functionally, auxiliary protein of the large-conductance, voltage and calcium-activated potassium channel (BK alpha). Required for the conversion of BK alpha channels from a high-voltage to a low-voltage activated channel type in non-excitable cells. These are characterized by negative membrane voltages and constant low levels of calcium. This is Leucine-rich repeat-containing protein 26 (Lrrc26) from Mus musculus (Mouse).